Consider the following 475-residue polypeptide: uncharacterized protein (475 aa).

Positions 185-244 (EISVSAISEQLASLMERVDKLEKMNAALEEENKQLKKEREATIKSVKKEAKKIKQEKPQI) form a coiled coil.

This is an uncharacterized protein from Nora virus.